Reading from the N-terminus, the 341-residue chain is L-threonine 3-dehydrogenase (341 aa).

Residue cysteine 38 coordinates Zn(2+). Catalysis depends on charge relay system residues threonine 40 and histidine 43. 6 residues coordinate Zn(2+): histidine 63, glutamate 64, cysteine 93, cysteine 96, cysteine 99, and cysteine 107. NAD(+) is bound by residues isoleucine 175, aspartate 195, arginine 200, 262-264 (LGI), and 286-287 (IY).

The protein belongs to the zinc-containing alcohol dehydrogenase family. Homotetramer. Requires Zn(2+) as cofactor.

Its subcellular location is the cytoplasm. The enzyme catalyses L-threonine + NAD(+) = (2S)-2-amino-3-oxobutanoate + NADH + H(+). It functions in the pathway amino-acid degradation; L-threonine degradation via oxydo-reductase pathway; glycine from L-threonine: step 1/2. In terms of biological role, catalyzes the NAD(+)-dependent oxidation of L-threonine to 2-amino-3-ketobutyrate. This is L-threonine 3-dehydrogenase from Escherichia coli (strain K12 / MC4100 / BW2952).